The following is a 197-amino-acid chain: 3-isopropylmalate dehydratase small subunit (197 aa).

It belongs to the LeuD family. LeuD type 1 subfamily. Heterodimer of LeuC and LeuD.

The catalysed reaction is (2R,3S)-3-isopropylmalate = (2S)-2-isopropylmalate. Its pathway is amino-acid biosynthesis; L-leucine biosynthesis; L-leucine from 3-methyl-2-oxobutanoate: step 2/4. Its function is as follows. Catalyzes the isomerization between 2-isopropylmalate and 3-isopropylmalate, via the formation of 2-isopropylmaleate. The protein is 3-isopropylmalate dehydratase small subunit of Corynebacterium glutamicum (strain R).